The chain runs to 814 residues: DNA ligase (814 aa).

NAD(+)-binding positions include 46-50 (DAEYD), 95-96 (SL), and Glu129. Lys131 serves as the catalytic N6-AMP-lysine intermediate. Arg152, Glu189, Lys305, and Lys329 together coordinate NAD(+). Zn(2+) is bound by residues Cys434, Cys437, Cys458, and Cys464. A disordered region spans residues 526–549 (SAQRRTEGEPAPKKPTKKKGEEED). Residues 735–814 (TSAAAFAGKT…DDWLAMLAEA (80 aa)) enclose the BRCT domain.

The protein belongs to the NAD-dependent DNA ligase family. LigA subfamily. It depends on Mg(2+) as a cofactor. Mn(2+) is required as a cofactor.

It carries out the reaction NAD(+) + (deoxyribonucleotide)n-3'-hydroxyl + 5'-phospho-(deoxyribonucleotide)m = (deoxyribonucleotide)n+m + AMP + beta-nicotinamide D-nucleotide.. Functionally, DNA ligase that catalyzes the formation of phosphodiester linkages between 5'-phosphoryl and 3'-hydroxyl groups in double-stranded DNA using NAD as a coenzyme and as the energy source for the reaction. It is essential for DNA replication and repair of damaged DNA. The chain is DNA ligase from Methylorubrum extorquens (strain CM4 / NCIMB 13688) (Methylobacterium extorquens).